Consider the following 265-residue polypeptide: Orotidine 5'-phosphate decarboxylase (265 aa).

Substrate contacts are provided by residues aspartate 38, 60 to 62 (KTH), 91 to 100 (DRKFADIGNT), tyrosine 213, and arginine 232. The active-site Proton donor is the lysine 93.

This sequence belongs to the OMP decarboxylase family.

It catalyses the reaction orotidine 5'-phosphate + H(+) = UMP + CO2. Its pathway is pyrimidine metabolism; UMP biosynthesis via de novo pathway; UMP from orotate: step 2/2. This chain is Orotidine 5'-phosphate decarboxylase (pyrG), found in Mucor circinelloides f. lusitanicus (Mucor racemosus var. lusitanicus).